A 289-amino-acid polypeptide reads, in one-letter code: Undecaprenyl-diphosphatase (289 aa).

Helical transmembrane passes span 23–43, 56–76, 104–124, 135–155, 165–185, 210–230, 235–255, and 269–289; these read LFLGIIQGLTEFFPISSTAHL, GVAVTASLQLGSIIALIAYFW, SAIVLGTLPIVFAGMLIKLFW, IPAIAVVSIVMALLLLIAENV, LSFWDGQIIGFSQVLALIPGV, FLLGIPAITLAGLVELKQAFG, VDVFPLLLGITSSAISSWIAI, and IFITYRFLFGTLLLFWYYLAF.

This sequence belongs to the UppP family.

The protein localises to the cell inner membrane. It catalyses the reaction di-trans,octa-cis-undecaprenyl diphosphate + H2O = di-trans,octa-cis-undecaprenyl phosphate + phosphate + H(+). Catalyzes the dephosphorylation of undecaprenyl diphosphate (UPP). Confers resistance to bacitracin. The protein is Undecaprenyl-diphosphatase of Prochlorococcus marinus (strain SARG / CCMP1375 / SS120).